Here is a 73-residue protein sequence, read N- to C-terminus: ATP synthase subunit c (73 aa).

The next 2 membrane-spanning stretches (helical) occupy residues 4-24 (LAIGAAIAALTGIGAGVGIGI) and 51-71 (GALAEATAIYGLLVAIMIIIF).

The protein belongs to the ATPase C chain family. As to quaternary structure, F-type ATPases have 2 components, F(1) - the catalytic core - and F(0) - the membrane proton channel. F(1) has five subunits: alpha(3), beta(3), gamma(1), delta(1), epsilon(1). F(0) has three main subunits: a(1), b(2) and c(10-14). The alpha and beta chains form an alternating ring which encloses part of the gamma chain. F(1) is attached to F(0) by a central stalk formed by the gamma and epsilon chains, while a peripheral stalk is formed by the delta and b chains.

It is found in the cell membrane. In terms of biological role, f(1)F(0) ATP synthase produces ATP from ADP in the presence of a proton or sodium gradient. F-type ATPases consist of two structural domains, F(1) containing the extramembraneous catalytic core and F(0) containing the membrane proton channel, linked together by a central stalk and a peripheral stalk. During catalysis, ATP synthesis in the catalytic domain of F(1) is coupled via a rotary mechanism of the central stalk subunits to proton translocation. Its function is as follows. Key component of the F(0) channel; it plays a direct role in translocation across the membrane. A homomeric c-ring of between 10-14 subunits forms the central stalk rotor element with the F(1) delta and epsilon subunits. The chain is ATP synthase subunit c from Caldanaerobacter subterraneus subsp. tengcongensis (strain DSM 15242 / JCM 11007 / NBRC 100824 / MB4) (Thermoanaerobacter tengcongensis).